Here is a 245-residue protein sequence, read N- to C-terminus: DNA repair protein RecO (245 aa).

It belongs to the RecO family.

Involved in DNA repair and RecF pathway recombination. The sequence is that of DNA repair protein RecO from Anaplasma phagocytophilum (strain HZ).